We begin with the raw amino-acid sequence, 739 residues long: MSLMLEPNPTQIKEERIYAEMGLTDEEFAMVERILGRLPNYTETGLFSVMWSEHCSYKNSKPVLRKFPTTGERVLQGPGEGAGIVDIGDNQAVVFKMESHNHPSAIEPYQGAATGVGGIIRDVFSMGARPVALLNSLRFGELQSPRVKYLFEEVVAGIAGYGNCIGIPTVGGEVQFDPCYEGNPLVNAMCVGLINHEDIKKGQAHGAGNTVMYVGASTGRDGIHGATFASEELSESSEAKRPAVQVGDPFMEKLLIEACLELIQSDALVGIQDMGAAGLTSSSAEMASKAGMGIEMYLDDVPQRETGMTPYEMMLSESQERMLIVVKKGREQEIVDLFEKYGLAAVTMGKVTEDKMLRLFHKGEKVAEVPADALAEEAPIYHKPSKEAAYFAEFQAMKMETPKVENYKEALFALLQQPTIASKEWVYDQYDYQVRTSTVVTPGSDAAVVRVRGTEKGLAMTTDCNSRYIYLDPEMGGKIAVAEAARNIVCSGGEPLAITDCLNFGNPEKPEIFWQIEKSVDGMSEACRTLQTPVIGGNVSMYNERSGEAVYPTPTVGMVGLVHDLKHVTTQEFKQAGDLVYVIGETKAEFGGSELQKMIHGKIFGQSPSIDLDVELKRQKQVLEAIQAGLVQSAHDVAEGGLAVAISESAIGAKGLGATVKLDGEATAALFAESQSRFVITVKRENKEAFEKAVEAIQVGEVTSTNEVTIHNEENEVLLTANVDEMRKAWKGAIPCLLK.

His54 is a catalytic residue. Residues Tyr57 and Lys96 each coordinate ATP. Mg(2+) is bound at residue Glu98. Residues 99-102 (SHNH) and Arg121 contribute to the substrate site. His100 serves as the catalytic Proton acceptor. Asp122 is a Mg(2+) binding site. Position 245 (Gln245) interacts with substrate. Asp273 contributes to the Mg(2+) binding site. A substrate-binding site is contributed by 317 to 319 (ESQ). Asp500 and Gly537 together coordinate ATP. Mg(2+) is bound at residue Asn538. Position 540 (Ser540) interacts with substrate.

It belongs to the FGAMS family. As to quaternary structure, monomer. Part of the FGAM synthase complex composed of 1 PurL, 1 PurQ and 2 PurS subunits.

It localises to the cytoplasm. The catalysed reaction is N(2)-formyl-N(1)-(5-phospho-beta-D-ribosyl)glycinamide + L-glutamine + ATP + H2O = 2-formamido-N(1)-(5-O-phospho-beta-D-ribosyl)acetamidine + L-glutamate + ADP + phosphate + H(+). The protein operates within purine metabolism; IMP biosynthesis via de novo pathway; 5-amino-1-(5-phospho-D-ribosyl)imidazole from N(2)-formyl-N(1)-(5-phospho-D-ribosyl)glycinamide: step 1/2. Part of the phosphoribosylformylglycinamidine synthase complex involved in the purines biosynthetic pathway. Catalyzes the ATP-dependent conversion of formylglycinamide ribonucleotide (FGAR) and glutamine to yield formylglycinamidine ribonucleotide (FGAM) and glutamate. The FGAM synthase complex is composed of three subunits. PurQ produces an ammonia molecule by converting glutamine to glutamate. PurL transfers the ammonia molecule to FGAR to form FGAM in an ATP-dependent manner. PurS interacts with PurQ and PurL and is thought to assist in the transfer of the ammonia molecule from PurQ to PurL. The polypeptide is Phosphoribosylformylglycinamidine synthase subunit PurL (Bacillus cereus (strain G9842)).